Consider the following 114-residue polypeptide: MSDVSLKLSAKDIYEKDFEKTMARGYRREEVDAFLDDIIADYQKMADMNNEVVKLSEENHKLKKELEELRLRVATSRPQDNKSFSSNNTTTNTSSNNVDILKRISNLEKAVFGK.

The stretch at 42-77 (YQKMADMNNEVVKLSEENHKLKKELEELRLRVATSR) forms a coiled coil. A disordered region spans residues 74 to 99 (ATSRPQDNKSFSSNNTTTNTSSNNVD). Low complexity predominate over residues 85–97 (SSNNTTTNTSSNN).

It belongs to the GpsB family. As to quaternary structure, forms polymers through the coiled coil domains. Interacts with PBP1, MreC and EzrA.

Its subcellular location is the cytoplasm. Divisome component that associates with the complex late in its assembly, after the Z-ring is formed, and is dependent on DivIC and PBP2B for its recruitment to the divisome. Together with EzrA, is a key component of the system that regulates PBP1 localization during cell cycle progression. Its main role could be the removal of PBP1 from the cell pole after pole maturation is completed. Also contributes to the recruitment of PBP1 to the division complex. Not essential for septum formation. This chain is Cell cycle protein GpsB, found in Staphylococcus aureus (strain Mu3 / ATCC 700698).